Consider the following 324-residue polypeptide: Acetyl-coenzyme A carboxylase carboxyl transferase subunit alpha (324 aa).

A CoA carboxyltransferase C-terminal domain is found at 44 to 298 (QLERRAEELR…KQTLIDTIDE (255 aa)).

Belongs to the AccA family. As to quaternary structure, acetyl-CoA carboxylase is a heterohexamer composed of biotin carboxyl carrier protein (AccB), biotin carboxylase (AccC) and two subunits each of ACCase subunit alpha (AccA) and ACCase subunit beta (AccD).

Its subcellular location is the cytoplasm. The catalysed reaction is N(6)-carboxybiotinyl-L-lysyl-[protein] + acetyl-CoA = N(6)-biotinyl-L-lysyl-[protein] + malonyl-CoA. It functions in the pathway lipid metabolism; malonyl-CoA biosynthesis; malonyl-CoA from acetyl-CoA: step 1/1. Component of the acetyl coenzyme A carboxylase (ACC) complex. First, biotin carboxylase catalyzes the carboxylation of biotin on its carrier protein (BCCP) and then the CO(2) group is transferred by the carboxyltransferase to acetyl-CoA to form malonyl-CoA. The chain is Acetyl-coenzyme A carboxylase carboxyl transferase subunit alpha from Rippkaea orientalis (strain PCC 8801 / RF-1) (Cyanothece sp. (strain PCC 8801)).